Here is a 402-residue protein sequence, read N- to C-terminus: Arginine biosynthesis bifunctional protein ArgJ (402 aa).

Substrate-binding residues include Thr-152, Lys-178, Thr-189, Glu-275, Asn-397, and Thr-402. The Nucleophile role is filled by Thr-189.

This sequence belongs to the ArgJ family. In terms of assembly, heterotetramer of two alpha and two beta chains.

The protein resides in the cytoplasm. It catalyses the reaction N(2)-acetyl-L-ornithine + L-glutamate = N-acetyl-L-glutamate + L-ornithine. The enzyme catalyses L-glutamate + acetyl-CoA = N-acetyl-L-glutamate + CoA + H(+). Its pathway is amino-acid biosynthesis; L-arginine biosynthesis; L-ornithine and N-acetyl-L-glutamate from L-glutamate and N(2)-acetyl-L-ornithine (cyclic): step 1/1. It functions in the pathway amino-acid biosynthesis; L-arginine biosynthesis; N(2)-acetyl-L-ornithine from L-glutamate: step 1/4. Catalyzes two activities which are involved in the cyclic version of arginine biosynthesis: the synthesis of N-acetylglutamate from glutamate and acetyl-CoA as the acetyl donor, and of ornithine by transacetylation between N(2)-acetylornithine and glutamate. The chain is Arginine biosynthesis bifunctional protein ArgJ from Symbiobacterium thermophilum (strain DSM 24528 / JCM 14929 / IAM 14863 / T).